Here is a 175-residue protein sequence, read N- to C-terminus: Thioredoxin-like protein CITRX, chloroplastic (175 aa).

The transit peptide at 1–73 directs the protein to the chloroplast; sequence MQAASLAFHP…REDYLVKKLS (73 aa). In terms of domain architecture, Thioredoxin spans 74-175; that stretch reads AKEIQELIKG…MMRDIINNDL (102 aa). Active-site nucleophile residues include Cys-98 and Cys-101. The cysteines at positions 98 and 101 are disulfide-linked.

The protein belongs to the thioredoxin family. Plant CITRX-type subfamily.

It is found in the plastid. It localises to the chloroplast. Probable thiol-disulfide oxidoreductase that may play a role in proper chloroplast development. In Solanum tuberosum (Potato), this protein is Thioredoxin-like protein CITRX, chloroplastic.